A 75-amino-acid polypeptide reads, in one-letter code: UPF0352 protein plu2871 (75 aa).

It belongs to the UPF0352 family.

This Photorhabdus laumondii subsp. laumondii (strain DSM 15139 / CIP 105565 / TT01) (Photorhabdus luminescens subsp. laumondii) protein is UPF0352 protein plu2871.